A 1342-amino-acid polypeptide reads, in one-letter code: DNA-directed RNA polymerase subunit beta (1342 aa).

This sequence belongs to the RNA polymerase beta chain family. In terms of assembly, the RNAP catalytic core consists of 2 alpha, 1 beta, 1 beta' and 1 omega subunit. When a sigma factor is associated with the core the holoenzyme is formed, which can initiate transcription.

It catalyses the reaction RNA(n) + a ribonucleoside 5'-triphosphate = RNA(n+1) + diphosphate. In terms of biological role, DNA-dependent RNA polymerase catalyzes the transcription of DNA into RNA using the four ribonucleoside triphosphates as substrates. This Salmonella typhi protein is DNA-directed RNA polymerase subunit beta.